A 640-amino-acid polypeptide reads, in one-letter code: Probable potassium transport system protein Kup 2 (640 aa).

The tract at residues 1–20 (MTADIAATPAETPATNGHGD) is disordered. Transmembrane regions (helical) follow at residues 30 to 50 (LTLG…LYAL), 71 to 91 (VVSL…VVIL), 117 to 137 (ASII…DAVI), 155 to 175 (AAFD…LFAV), 183 to 203 (VAAF…IAAF), 224 to 244 (FMLH…LAVT), 265 to 285 (WLFV…ALVI), 294 to 314 (PFFL…ATVA), 363 to 383 (LLLV…ALAS), 385 to 405 (YGIS…VVIW), 410 to 430 (WSPI…LTFL), and 437 to 457 (VLEG…LMYT).

Belongs to the HAK/KUP transporter (TC 2.A.72) family.

It localises to the cell inner membrane. It carries out the reaction K(+)(in) + H(+)(in) = K(+)(out) + H(+)(out). In terms of biological role, transport of potassium into the cell. Likely operates as a K(+):H(+) symporter. The polypeptide is Probable potassium transport system protein Kup 2 (Bradyrhizobium sp. (strain ORS 278)).